The following is a 173-amino-acid chain: Crossover junction endodeoxyribonuclease RuvC (173 aa).

Catalysis depends on residues D8, E67, and D139. 3 residues coordinate Mg(2+): D8, E67, and D139.

Belongs to the RuvC family. As to quaternary structure, homodimer which binds Holliday junction (HJ) DNA. The HJ becomes 2-fold symmetrical on binding to RuvC with unstacked arms; it has a different conformation from HJ DNA in complex with RuvA. In the full resolvosome a probable DNA-RuvA(4)-RuvB(12)-RuvC(2) complex forms which resolves the HJ. The cofactor is Mg(2+).

The protein resides in the cytoplasm. It catalyses the reaction Endonucleolytic cleavage at a junction such as a reciprocal single-stranded crossover between two homologous DNA duplexes (Holliday junction).. Functionally, the RuvA-RuvB-RuvC complex processes Holliday junction (HJ) DNA during genetic recombination and DNA repair. Endonuclease that resolves HJ intermediates. Cleaves cruciform DNA by making single-stranded nicks across the HJ at symmetrical positions within the homologous arms, yielding a 5'-phosphate and a 3'-hydroxyl group; requires a central core of homology in the junction. The consensus cleavage sequence is 5'-(A/T)TT(C/G)-3'. Cleavage occurs on the 3'-side of the TT dinucleotide at the point of strand exchange. HJ branch migration catalyzed by RuvA-RuvB allows RuvC to scan DNA until it finds its consensus sequence, where it cleaves and resolves the cruciform DNA. The protein is Crossover junction endodeoxyribonuclease RuvC of Vibrio atlanticus (strain LGP32) (Vibrio splendidus (strain Mel32)).